We begin with the raw amino-acid sequence, 286 residues long: Acetylglutamate kinase (286 aa).

Substrate contacts are provided by residues 70 to 71 (GG), Arg92, and Asn184.

Belongs to the acetylglutamate kinase family. ArgB subfamily.

Its subcellular location is the cytoplasm. The enzyme catalyses N-acetyl-L-glutamate + ATP = N-acetyl-L-glutamyl 5-phosphate + ADP. It functions in the pathway amino-acid biosynthesis; L-arginine biosynthesis; N(2)-acetyl-L-ornithine from L-glutamate: step 2/4. Functionally, catalyzes the ATP-dependent phosphorylation of N-acetyl-L-glutamate. The chain is Acetylglutamate kinase from Ruegeria sp. (strain TM1040) (Silicibacter sp.).